An 854-amino-acid polypeptide reads, in one-letter code: Protein unc-33 (854 aa).

3 disordered regions span residues 57-114 (ETVS…IPAP), 130-327 (ELFG…DGNG), and 794-854 (VERV…TGFW). Polar residues-rich tracts occupy residues 58–68 (TVSNKSRSSEG) and 75–97 (RPNS…TSAR). Positions 193 to 202 (KVLRGEKSTP) are enriched in basic and acidic residues. The span at 240–257 (VDDEEEPEAEAQEMEEPQ) shows a compositional bias: acidic residues. A compositionally biased stretch (basic and acidic residues) spans 279-298 (HPSEDGDSTRNGETPTDRRN). A compositionally biased stretch (polar residues) spans 802-811 (SSQQQKPQQN). Basic and acidic residues predominate over residues 816–827 (NSGDFDRNRTKV).

Belongs to the metallo-dependent hydrolases superfamily. Hydantoinase/dihydropyrimidinase family. Isoform a: Probable monomer. Isoform b: Probable homodimer. Isoform c: Probable homodimer. Probable heterodimer composed of isoform b and isoform c. Interacts with unc-14 and kinesin-1 motor complex light chain klc-1; both interactions regulate unc-33 neurite localization. Interacts with fln-1 (via calponin-homology (CH) domains and filamin repeat 18-19). Isoform c: Interacts with vab-8 isoform a. As to expression, expressed in ventral cord and nerve ring (at protein level). Isoform a: Expressed in nerve ring (at protein level). Expressed in the nervous system, two amphid socket cells and weakly in non-neuronal pharyngeal cells.

The protein resides in the cell projection. Its subcellular location is the axon. It localises to the dendrite. During neurogenesis, plays an essential role in axonal guidance and outgrowth by regulating the polarization of both microtubule and actin cytoskeletons. Establishes the asymmetry of axonal and dendrite microtubules and the polarized sorting of neuronal proteins. This is achieved in part by regulating the localization of kinesin-like protein unc-104. In neurons without a distal microtubule-organizing center (MTOC), also controls the organization of microtubules in dendrites. During the dorso-ventral axonal guidance and outgrowth of VD neurons, required downstream of Rac GTPases ced-10 and mig-2 to inhibit growth cone filopodial protrusion mediated by the unc-6/netrin receptor unc-40-unc-5. Specifically, regulates growth cone filopodial protrusion polarity, and thus migration, by promoting F-actin polarization and by restricting plus-end microtubule accumulation in the growth cone. Probably downstream of mab-20/Sema2a and mab-20 receptor plx-2, regulates the guidance of DD/VD neuron axons by modulating fln-1 interaction with F-actin which results in the remodeling of the actin cytoskeleton. In hermaphrodites, involved in sex myoblast (SM) migration by regulating the gonad-dependent repulsion of SMs. In terms of biological role, in neurons, required for the polarized sorting of axonal proteins. In PLM neuron, regulates innexin unc-9 gap junction turnover by suppressing unc-9 transport out of gap junctions. Plays a role in locomotion and egg-laying. Its function is as follows. In PLM neuron, regulates innexin unc-9 gap junction turnover by suppressing unc-9 transport out of gap junctions. The chain is Protein unc-33 from Caenorhabditis elegans.